The primary structure comprises 381 residues: Actin-binding Rho-activating protein (381 aa).

2 disordered regions span residues 39 to 156 and 179 to 207; these read ENSI…SHGS and QEEPTWRSDSVDTEDSGYGGEAEERPEQD. Positions 69–79 are enriched in polar residues; it reads PTSHQKAQSAP. The span at 97-110 shows a compositional bias: basic and acidic residues; sequence KAPEVSHIKKKEVS. Ser-156 and Ser-188 each carry phosphoserine. Residues 179-188 are compositionally biased toward basic and acidic residues; it reads QEEPTWRSDS. 2 actin-binding regions span residues 199–299 and 300–381; these read EAEE…AERA and KRAE…TLLK. 2 interaction with actin regions span residues 240-285 and 352-381; these read SPVG…GDEG and MRARKHGLVDFEGEMLWQGRDDHVVITLLK.

Binds F-actin and ABLIM1, ABLIM2 and ABLIM3. Interaction with ABLIM2 and ABLIM3 enhances activity.

It localises to the cytoplasm. The protein resides in the myofibril. Its subcellular location is the sarcomere. The protein localises to the cytoskeleton. In terms of biological role, acts as an activator of serum response factor (SRF)-dependent transcription possibly by inducing nuclear translocation of MKL1 or MKL2 and through a mechanism requiring Rho-actin signaling. The chain is Actin-binding Rho-activating protein from Homo sapiens (Human).